We begin with the raw amino-acid sequence, 162 residues long: Ecotin (162 aa).

A signal peptide spans M1–A18. The cysteines at positions 70 and 107 are disulfide-linked.

It belongs to the protease inhibitor I11 (ecotin) family. In terms of assembly, homodimer.

The protein resides in the periplasm. General inhibitor of pancreatic serine proteases: inhibits chymotrypsin, trypsin, elastases, factor X, kallikrein as well as a variety of other proteases. The chain is Ecotin from Salmonella arizonae (strain ATCC BAA-731 / CDC346-86 / RSK2980).